The primary structure comprises 350 residues: Biotin synthase (350 aa).

Positions 38-256 (NHVQVSTLLS…IAVARIMMPE (219 aa)) constitute a Radical SAM core domain. The [4Fe-4S] cluster site is built by Cys53, Cys57, and Cys60. [2Fe-2S] cluster-binding residues include Cys97, Cys128, Cys188, and Arg260.

The protein belongs to the radical SAM superfamily. Biotin synthase family. In terms of assembly, homodimer. The cofactor is [4Fe-4S] cluster. [2Fe-2S] cluster serves as cofactor.

It carries out the reaction (4R,5S)-dethiobiotin + (sulfur carrier)-SH + 2 reduced [2Fe-2S]-[ferredoxin] + 2 S-adenosyl-L-methionine = (sulfur carrier)-H + biotin + 2 5'-deoxyadenosine + 2 L-methionine + 2 oxidized [2Fe-2S]-[ferredoxin]. It functions in the pathway cofactor biosynthesis; biotin biosynthesis; biotin from 7,8-diaminononanoate: step 2/2. Catalyzes the conversion of dethiobiotin (DTB) to biotin by the insertion of a sulfur atom into dethiobiotin via a radical-based mechanism. The protein is Biotin synthase of Aliivibrio fischeri (strain ATCC 700601 / ES114) (Vibrio fischeri).